A 504-amino-acid chain; its full sequence is DnaJ homolog subfamily C member 3 (504 aa).

The first 31 residues, 1 to 31 (MVAPGSVTSRLGSVFPFLLVLVDLQYEGAEC), serve as a signal peptide directing secretion. TPR repeat units follow at residues 37–70 (VEKHLELGKKLLAAGQLADALSQFHAAVDGDPDN), 72–104 (IAYYRRATVFLAMGKSKAALPDLTKVIELKMDF), 105–138 (TAARLQRGHLLLKQGKLDEAEDDFKKVLKSNPSE), 154–187 (MQRLRSQALDAFESSDFTAAITFLDKILEVCVWD), 189–221 (ELRELRAECFIKEGEPRKAISDLKASSKLKNDN), 222–255 (TEAFYKISTLYYELGDHELSLSEVRECLKLDQDH), 268–301 (LNKLIESAEELIKEGRYTDAISKYESVMKTEPGV), 306–339 (IRSKERICHCFSKDEKPVEAIRVCSEVLQVEPDN), and 340–373 (VNALKDRAEAYLIEEMYDEAIQDYETAQEHNEND). An intrachain disulfide couples C248 to C258. Residue S274 is modified to Phosphoserine. An intrachain disulfide couples C313 to C329. Residues 375–393 (QIREGLEKAQRLLKQSQRR) are flexible linker. Residues 394-462 (DYYKILGVKR…EMRKKFDDGE (69 aa)) form the J domain. The segment at 451–481 (DPEMRKKFDDGEDPLDAESQQGGGGNPFHRS) is disordered.

As to quaternary structure, interacts with EIF2AK4/GCN2; this interaction occurs under endoplasmic reticulum (ER) stress, hypothermic and amino acid starving stress conditions and inhibits EIF2AK4/GCN2 kinase activity. Interacts with EIF2AK3. Interacts with EIF2AK2. Forms a trimeric complex with DNAJB1 and HSPA8. Interacts with THAP12.

The protein localises to the endoplasmic reticulum. Involved in the unfolded protein response (UPR) during endoplasmic reticulum (ER) stress. Acts as a negative regulator of the EIF2AK4/GCN2 kinase activity by preventing the phosphorylation of eIF-2-alpha at 'Ser-52' and hence attenuating general protein synthesis under ER stress, hypothermic and amino acid starving stress conditions. Co-chaperone of HSPA8/HSC70, it stimulates its ATPase activity. May inhibit both the autophosphorylation of EIF2AK2/PKR and the ability of EIF2AK2 to catalyze phosphorylation of the EIF2A. May inhibit EIF2AK3/PERK activity. The sequence is that of DnaJ homolog subfamily C member 3 (DNAJC3) from Bos taurus (Bovine).